Reading from the N-terminus, the 49-residue chain is YLYQWLGAPAPYPDPLEPKREVCELNPDCDELADHIGFQEAYRRFYGPV.

The 47-residue stretch at tyrosine 1–glycine 47 folds into the Gla domain. Proline 9 carries the post-translational modification 4-hydroxyproline. Ca(2+)-binding residues include glutamate 17, glutamate 21, glutamate 24, and aspartate 30. A 4-carboxyglutamate mark is found at glutamate 17, glutamate 21, and glutamate 24. Cysteine 23 and cysteine 29 are disulfide-bonded.

It belongs to the osteocalcin/matrix Gla protein family. Post-translationally, gamma-carboxyglutamate residues are formed by vitamin K dependent carboxylation by GGCX. These residues are essential for the binding of calcium. Decarboxylation promotes the hormone activity.

Its subcellular location is the secreted. Its function is as follows. The carboxylated form is one of the main organic components of the bone matrix, which constitutes 1-2% of the total bone protein: it acts as a negative regulator of bone formation and is required to limit bone formation without impairing bone resorption or mineralization. The carboxylated form binds strongly to apatite and calcium. The uncarboxylated form acts as a hormone secreted by osteoblasts, which regulates different cellular processes, such as energy metabolism, male fertility and brain development. Regulates of energy metabolism by acting as a hormone favoring pancreatic beta-cell proliferation, insulin secretion and sensitivity and energy expenditure. Uncarboxylated osteocalcin hormone also promotes testosterone production in the testes: acts as a ligand for G protein-coupled receptor GPRC6A at the surface of Leydig cells, initiating a signaling response that promotes the expression of enzymes required for testosterone synthesis in a CREB-dependent manner. Also acts as a regulator of brain development: osteocalcin hormone crosses the blood-brain barrier and acts as a ligand for GPR158 on neurons, initiating a signaling response that prevents neuronal apoptosis in the hippocampus, favors the synthesis of all monoamine neurotransmitters and inhibits that of gamma-aminobutyric acid (GABA). Osteocalcin also crosses the placenta during pregnancy and maternal osteocalcin is required for fetal brain development. This is Osteocalcin (BGLAP) from Macaca fascicularis (Crab-eating macaque).